The following is a 108-amino-acid chain: UPF0060 membrane protein YnfA (108 aa).

At 1–5 the chain is on the periplasmic side; sequence MFKTT. Residues 6 to 26 form a helical membrane-spanning segment; the sequence is LLFFITALCEIIGCFLPWLWL. Residues 27–30 are Cytoplasmic-facing; it reads KRNG. Residues 31–51 traverse the membrane as a helical segment; the sequence is SIWLLLPAGVSLAFFVWLLTL. Residues 52-60 are Periplasmic-facing; it reads HPAASGRVY. Residues 61–81 form a helical membrane-spanning segment; that stretch reads AAYGGVYVCTALLWLRFIDGV. At 82–84 the chain is on the cytoplasmic side; the sequence is KLS. The chain crosses the membrane as a helical span at residues 85-105; it reads LYDWSGALIALCGMLIIVAGW. Residues 106-108 are Periplasmic-facing; it reads GRA.

The protein belongs to the UPF0060 family.

The protein localises to the cell inner membrane. The sequence is that of UPF0060 membrane protein YnfA from Escherichia fergusonii (strain ATCC 35469 / DSM 13698 / CCUG 18766 / IAM 14443 / JCM 21226 / LMG 7866 / NBRC 102419 / NCTC 12128 / CDC 0568-73).